The primary structure comprises 87 residues: Small ribosomal subunit protein bS20 (87 aa).

Residues Met-1–Ser-26 are disordered.

The protein belongs to the bacterial ribosomal protein bS20 family.

Functionally, binds directly to 16S ribosomal RNA. The chain is Small ribosomal subunit protein bS20 from Photorhabdus laumondii subsp. laumondii (strain DSM 15139 / CIP 105565 / TT01) (Photorhabdus luminescens subsp. laumondii).